Consider the following 898-residue polypeptide: Filament-like plant protein 7 (898 aa).

Coiled coils occupy residues 23–224 and 287–320; these read EVVA…TAEA and EKIN…LQFS. 3 disordered regions span residues 429-482, 693-723, and 777-835; these read DNRP…DIKS, PGNQ…KLEE, and KSNN…GGNS. Residues 434–459 show a composition bias toward low complexity; the sequence is SSPICSSDSISATGPVENESNENSSE. Polar residues predominate over residues 460–469; that stretch reads ATKTSGTVYS. A coiled-coil region spans residues 703-764; the sequence is VEEEANDKTA…KALTNSKETA (62 aa). Residues 808-822 show a composition bias toward basic and acidic residues; sequence MKAEDHNTGESKDQK.

It belongs to the FPP family. As to quaternary structure, interacts with WPP/MAF proteins.

This is Filament-like plant protein 7 (FPP7) from Arabidopsis thaliana (Mouse-ear cress).